We begin with the raw amino-acid sequence, 1090 residues long: MNSSDVQMMSSQDAPGSAGLAPDNIASSLPSKKKSRRGADPTNQKRRCVSTACIACRRRKSKCDGALPSCAACASVYGTECIYDPNSDHRRKGVYREKNDSMKAQNATLQILIEAILNASEEDVIDIVRRIRTCDDLDEVAESIRRDEKNATATNDNDDSDEPTQPGRDDATSQAVEGERDLARKMGELRIENGSVRFIGGTSHLIYLSEPTDASEEPELETRLSTCDENPITTWTEVTKNPQLIIHLVNMYFNWHYPYFTTLSRSLFYRDFIKGKPAGQPRSTVYCSSLLVNAMLALGCHFTSVDGAFAVPGDSRTKGDHFFAEAKRLIVQNDEYEKPRLTTVQALALMSVREAGCGREAKGWVYSGMSFRMAQDIGLNLDIGSLDEKEVDARRITFWGCFVFDKCWSNYLGRLPQLPKNTYNVPKYDVFPDEDAELWSPYTDAGFDQSCKQPSRTRAIGLQLSKLCEISSDLLLFFYHPSHIGRSSGKSAELKKLSELHRRLEDWRTELPKEFEPKDGQLPNVILMHMFYHLQYIHLFRPFLKYTKEASPLEKVQPRRICTTNANSISKLMRLYKKLYNLRQICNIAVYMLHSACTIHMLNLPEKTARRDITHGVRQLEEMAEDWPCARRTLGIISVLARKWNVELPEEAAIVLKRTDEKYGMFSTSEVPSPNRTAPSLAPSSPAPPYTPEASLLFSTTAAAVLEQQPYSPMTLYSHPTPPHLGPESISDPGMSPNIVTFSDLPDPSAPIIPQQQQNMQAISSLSQNNMLHQHHHHLQNQHQPQQPHHNHMTYQQQQHNLLTHPVSASSMSMSDTLATITAWGIPTSSPGNNNNNNIVSQHPHHQKQPQQQQQPQAQRYPTVGSVGTNTVKPPAAATQTFTPAQLHANNLATATRSTASNHKSVGRHVSPSSIYAIDGQDWYLKDGVTWQQGFQGWDLEGGGAGTATSTGGIGDGGGPTGGAGDSMARLAPRGNIGGGGGGGGGSTGQRQQQQQRQQQQQQQQQQQQQQQQQQQQQQQQQQQEANMFAYHHGAERGGGGIESTGMGMTTVGGGGGGFDPIGGSGLLDDLVGLDELGSLDGLGHLPGLD.

The segment covering 1–14 (MNSSDVQMMSSQDA) has biased composition (polar residues). Positions 1–43 (MNSSDVQMMSSQDAPGSAGLAPDNIASSLPSKKKSRRGADPTN) are disordered. Residues 53–81 (CIACRRRKSKCDGALPSCAACASVYGTEC) constitute a DNA-binding region (zn(2)-C6 fungal-type). 6 disordered regions span residues 145–176 (RRDE…SQAV), 666–689 (FSTS…PAPP), 773–798 (HQHH…YQQQ), 825–875 (GIPT…VKPP), 936–999 (QGWD…QRQQ), and 1033–1053 (HGAE…TTVG). The span at 167–176 (GRDDATSQAV) shows a compositional bias: basic and acidic residues. Polar residues predominate over residues 666–677 (FSTSEVPSPNRT). The segment covering 849 to 859 (QPQQQQQPQAQ) has biased composition (low complexity). 2 stretches are compositionally biased toward gly residues: residues 940-965 (LEGG…GGAG) and 976-988 (NIGG…GGST). The span at 990-999 (QRQQQQQRQQ) shows a compositional bias: low complexity.

The protein resides in the nucleus. Functionally, pathway-specific regulatory gene of nitrate assimilation; it activates the transcription of the genes for nitrate and nitrite reductases. This chain is Nitrogen assimilation transcription factor nit-4 (nit-4), found in Neurospora crassa (strain ATCC 24698 / 74-OR23-1A / CBS 708.71 / DSM 1257 / FGSC 987).